The following is a 331-amino-acid chain: GTPase Obg (331 aa).

The 159-residue stretch at 1–159 folds into the Obg domain; sequence MHFIDEVKIY…MWIHLRLKLL (159 aa). Residues 160–327 enclose the OBG-type G domain; the sequence is SDVGLIGLPN…IVKLALEIIK (168 aa). GTP contacts are provided by residues 166-173, 191-195, 212-215, 279-282, and 308-310; these read GLPNAGKS, FTTLV, DIPG, NKCD, and STY. 2 residues coordinate Mg(2+): Ser-173 and Thr-193.

The protein belongs to the TRAFAC class OBG-HflX-like GTPase superfamily. OBG GTPase family. As to quaternary structure, monomer. Mg(2+) is required as a cofactor.

It localises to the cytoplasm. An essential GTPase which binds GTP, GDP and possibly (p)ppGpp with moderate affinity, with high nucleotide exchange rates and a fairly low GTP hydrolysis rate. Plays a role in control of the cell cycle, stress response, ribosome biogenesis and in those bacteria that undergo differentiation, in morphogenesis control. The chain is GTPase Obg from Rickettsia prowazekii (strain Madrid E).